Here is a 250-residue protein sequence, read N- to C-terminus: Leucyl/phenylalanyl-tRNA--protein transferase (250 aa).

This sequence belongs to the L/F-transferase family.

It is found in the cytoplasm. It carries out the reaction N-terminal L-lysyl-[protein] + L-leucyl-tRNA(Leu) = N-terminal L-leucyl-L-lysyl-[protein] + tRNA(Leu) + H(+). The enzyme catalyses N-terminal L-arginyl-[protein] + L-leucyl-tRNA(Leu) = N-terminal L-leucyl-L-arginyl-[protein] + tRNA(Leu) + H(+). The catalysed reaction is L-phenylalanyl-tRNA(Phe) + an N-terminal L-alpha-aminoacyl-[protein] = an N-terminal L-phenylalanyl-L-alpha-aminoacyl-[protein] + tRNA(Phe). In terms of biological role, functions in the N-end rule pathway of protein degradation where it conjugates Leu, Phe and, less efficiently, Met from aminoacyl-tRNAs to the N-termini of proteins containing an N-terminal arginine or lysine. In Cupriavidus necator (strain ATCC 17699 / DSM 428 / KCTC 22496 / NCIMB 10442 / H16 / Stanier 337) (Ralstonia eutropha), this protein is Leucyl/phenylalanyl-tRNA--protein transferase.